Reading from the N-terminus, the 241-residue chain is Triosephosphate isomerase (241 aa).

Substrate is bound at residue 9 to 11 (NWK). His-96 (electrophile) is an active-site residue. The active-site Proton acceptor is Glu-165. Residues Gly-171, Ser-204, and 225–226 (GG) each bind substrate.

It belongs to the triosephosphate isomerase family. In terms of assembly, homodimer.

It is found in the cytoplasm. The enzyme catalyses D-glyceraldehyde 3-phosphate = dihydroxyacetone phosphate. Its pathway is carbohydrate biosynthesis; gluconeogenesis. It participates in carbohydrate degradation; glycolysis; D-glyceraldehyde 3-phosphate from glycerone phosphate: step 1/1. Involved in the gluconeogenesis. Catalyzes stereospecifically the conversion of dihydroxyacetone phosphate (DHAP) to D-glyceraldehyde-3-phosphate (G3P). The chain is Triosephosphate isomerase from Gloeothece citriformis (strain PCC 7424) (Cyanothece sp. (strain PCC 7424)).